The sequence spans 281 residues: Foldase protein PrsA (281 aa).

Positions 1–18 (MKKWMMAAAVVSLMALSA) are cleaved as a signal peptide. Residue cysteine 19 is the site of N-palmitoyl cysteine attachment. The S-diacylglycerol cysteine moiety is linked to residue cysteine 19. The 91-residue stretch at 133 to 223 (KPKIRASHIL…YGYHIIKVTD (91 aa)) folds into the PpiC domain.

This sequence belongs to the PrsA family.

The protein resides in the cell membrane. It catalyses the reaction [protein]-peptidylproline (omega=180) = [protein]-peptidylproline (omega=0). Its function is as follows. Plays a major role in protein secretion by helping the post-translocational extracellular folding of several secreted proteins. This is Foldase protein PrsA from Geobacillus kaustophilus (strain HTA426).